The primary structure comprises 432 residues: Probable D-serine dehydratase (432 aa).

K112 is subject to N6-(pyridoxal phosphate)lysine.

This sequence belongs to the serine/threonine dehydratase family. DsdA subfamily. Pyridoxal 5'-phosphate serves as cofactor.

The catalysed reaction is D-serine = pyruvate + NH4(+). This is Probable D-serine dehydratase from Pediococcus pentosaceus (strain ATCC 25745 / CCUG 21536 / LMG 10740 / 183-1w).